The following is a 369-amino-acid chain: MNDFTKNIAQALFNQDKINDLLRKELQQAVNDLLEAELTAFLGYNPYARDGWNTGNSRNGAYFRKVDTQFGKIEIQVPRDRNGLFHQHTLPDYKQHSDVLENMIIKLYSKGVTTREIADLIEKMYGSHYSPAQVSNISKQMIPKVEAYHKRKLSDKFFCVYLDATYVPLRRETFEREAVYIAIGIKPNGHKEVIDYCIAPNENIEVWTELLQSMKSRGLEQVELFLSDGVVGMKTALAKTYPQAHFQRCLVHVMRNICAKVRVEDREAIMNEFKQIHQQANKAAAVDVLHAFYAKWDKSYNHVIRNLKDIEPDLLVFYNYPKQIRASIYSTNMIESFNNVIKRKVKPKAEFPTEQSLDTFIGIQAMSYQ.

This sequence belongs to the transposase mutator family.

Its function is as follows. Required for the transposition of the insertion element. This chain is Transposase for insertion sequence element IS1201, found in Lactobacillus helveticus (Lactobacillus suntoryeus).